Reading from the N-terminus, the 86-residue chain is Anti-adapter protein IraP (86 aa).

A coiled-coil region spans residues 1–36 (MKNLIAELLLKLAQKEEESKELCAQVEALEIIVTAM).

This sequence belongs to the IraP family. In terms of assembly, interacts with RssB.

It localises to the cytoplasm. Inhibits RpoS proteolysis by regulating RssB activity, thereby increasing the stability of the sigma stress factor RpoS especially during phosphate starvation, but also in stationary phase and during nitrogen starvation. Its effect on RpoS stability is due to its interaction with RssB, which probably blocks the interaction of RssB with RpoS, and the consequent delivery of the RssB-RpoS complex to the ClpXP protein degradation pathway. In Shigella boydii serotype 18 (strain CDC 3083-94 / BS512), this protein is Anti-adapter protein IraP.